The primary structure comprises 335 residues: MGRLILEHTLQGHKGRIWGVAWHPKGNVFASCGEDKAIRIWSLTGNTWSTKTILSDGHKRTIREIRWSPCGQYLASASFDATTAIWSKSSGEFECNATLEGHENEVKSVSWSRSGGLLATCSRDKSVWIWEVAGDDEFECAAVLNPHTQDVKRVVWHPTKDVLASASYDNTIKMFAEEPIDNDWDCTATLTSHTSTVWGIDFDADGERLVSCSDDTTIKIWKAYHPGNTAGVATPEQQTVWKCVCTVSGQHSRAIYDVSWCKLTGLIATACGDDGIRIFKETSDSKPDEPTFEQITAEEGAHDQDVNSVQWNPVVAGQLISCSDDGTIKIWKVSE.

7 WD repeats span residues 12-51, 57-96, 101-140, 146-185, 192-231, 250-289, and 301-335; these read GHKGRIWGVAWHPKGNVFASCGEDKAIRIWSLTGNTWSTK, GHKRTIREIRWSPCGQYLASASFDATTAIWSKSSGEFECN, GHENEVKSVSWSRSGGLLATCSRDKSVWIWEVAGDDEFEC, PHTQDVKRVVWHPTKDVLASASYDNTIKMFAEEPIDNDWD, SHTSTVWGIDFDADGERLVSCSDDTTIKIWKAYHPGNTAG, QHSRAIYDVSWCKLTGLIATACGDDGIRIFKETSDSKPDE, and AHDQDVNSVQWNPVVAGQLISCSDDGTIKIWKVSE.

The protein belongs to the WD repeat CIA1 family.

Its function is as follows. Essential component of the cytosolic iron-sulfur (Fe/S) protein assembly machinery. Required for the maturation of extramitochondrial Fe/S proteins. This Drosophila simulans (Fruit fly) protein is Probable cytosolic iron-sulfur protein assembly protein Ciao1.